The sequence spans 174 residues: NADH-ubiquinone oxidoreductase chain 6 (174 aa).

4 consecutive transmembrane segments (helical) span residues 25 to 45, 48 to 68, 82 to 102, and 143 to 163; these read SMGL…GIYV, FWFS…LFIY, FKLT…FFIL, and LITL…VKIT.

Belongs to the complex I subunit 6 family.

The protein localises to the mitochondrion membrane. It carries out the reaction a ubiquinone + NADH + 5 H(+)(in) = a ubiquinol + NAD(+) + 4 H(+)(out). Its function is as follows. Core subunit of the mitochondrial membrane respiratory chain NADH dehydrogenase (Complex I) that is believed to belong to the minimal assembly required for catalysis. Complex I functions in the transfer of electrons from NADH to the respiratory chain. The immediate electron acceptor for the enzyme is believed to be ubiquinone. The protein is NADH-ubiquinone oxidoreductase chain 6 (mt:ND6) of Anopheles gambiae (African malaria mosquito).